Consider the following 117-residue polypeptide: Putative membrane protein insertion efficiency factor (117 aa).

The segment at 87–117 (RKGGPSAAEPAIEGHIPSSPAAETPSHVQGA) is disordered.

The protein belongs to the UPF0161 family.

The protein localises to the cell membrane. Its function is as follows. Could be involved in insertion of integral membrane proteins into the membrane. In Streptomyces avermitilis (strain ATCC 31267 / DSM 46492 / JCM 5070 / NBRC 14893 / NCIMB 12804 / NRRL 8165 / MA-4680), this protein is Putative membrane protein insertion efficiency factor.